Here is a 303-residue protein sequence, read N- to C-terminus: Diaminopimelate epimerase (303 aa).

3 residues coordinate substrate: Asn-15, Gln-47, and Asn-67. The active-site Proton donor is Cys-76. Residues 77–78 (GN), Asn-163, Asn-197, and 215–216 (ER) contribute to the substrate site. The Proton acceptor role is filled by Cys-224. 225 to 226 (GS) provides a ligand contact to substrate. The disordered stretch occupies residues 279–303 (DPATGEWSRDTQGLQGSGNADRGTA).

Belongs to the diaminopimelate epimerase family. Homodimer.

The protein localises to the cytoplasm. The enzyme catalyses (2S,6S)-2,6-diaminopimelate = meso-2,6-diaminopimelate. The protein operates within amino-acid biosynthesis; L-lysine biosynthesis via DAP pathway; DL-2,6-diaminopimelate from LL-2,6-diaminopimelate: step 1/1. Functionally, catalyzes the stereoinversion of LL-2,6-diaminopimelate (L,L-DAP) to meso-diaminopimelate (meso-DAP), a precursor of L-lysine and an essential component of the bacterial peptidoglycan. The polypeptide is Diaminopimelate epimerase (Brucella canis (strain ATCC 23365 / NCTC 10854 / RM-666)).